The following is a 93-amino-acid chain: Small ribosomal subunit protein uS19 (93 aa).

Belongs to the universal ribosomal protein uS19 family.

Its function is as follows. Protein S19 forms a complex with S13 that binds strongly to the 16S ribosomal RNA. The polypeptide is Small ribosomal subunit protein uS19 (Campylobacter jejuni subsp. jejuni serotype O:6 (strain 81116 / NCTC 11828)).